A 238-amino-acid chain; its full sequence is Transmembrane protein 127 (238 aa).

Position 1 is an N-acetylmethionine (Met-1). The span at 1 to 11 (MYAPGGAGLPG) shows a compositional bias: gly residues. Positions 1 to 27 (MYAPGGAGLPGGRRRRSPGGSALPKQP) are disordered. Phosphoserine is present on Ser-17. 3 helical membrane passes run 96–116 (IAAFCFLGILCSLSAFLLDVF), 130–150 (AFAHILTVLQCATVIGFSYWA), and 169–189 (VYVTFAVSFYLVAGAGGASIL).

Belongs to the TMEM127 family. In terms of tissue distribution, widely expressed.

The protein localises to the cell membrane. It is found in the cytoplasm. Its function is as follows. Controls cell proliferation acting as a negative regulator of TOR signaling pathway mediated by mTORC1. May act as a tumor suppressor. This chain is Transmembrane protein 127 (TMEM127), found in Homo sapiens (Human).